The following is a 362-amino-acid chain: Cobalt-precorrin-5B C(1)-methyltransferase (362 aa).

The protein belongs to the CbiD family.

It carries out the reaction Co-precorrin-5B + S-adenosyl-L-methionine = Co-precorrin-6A + S-adenosyl-L-homocysteine. It participates in cofactor biosynthesis; adenosylcobalamin biosynthesis; cob(II)yrinate a,c-diamide from sirohydrochlorin (anaerobic route): step 6/10. Its function is as follows. Catalyzes the methylation of C-1 in cobalt-precorrin-5B to form cobalt-precorrin-6A. This chain is Cobalt-precorrin-5B C(1)-methyltransferase, found in Burkholderia cenocepacia (strain ATCC BAA-245 / DSM 16553 / LMG 16656 / NCTC 13227 / J2315 / CF5610) (Burkholderia cepacia (strain J2315)).